A 477-amino-acid polypeptide reads, in one-letter code: Aspartyl/glutamyl-tRNA(Asn/Gln) amidotransferase subunit B (477 aa).

Belongs to the GatB/GatE family. GatB subfamily. In terms of assembly, heterotrimer of A, B and C subunits.

It catalyses the reaction L-glutamyl-tRNA(Gln) + L-glutamine + ATP + H2O = L-glutaminyl-tRNA(Gln) + L-glutamate + ADP + phosphate + H(+). It carries out the reaction L-aspartyl-tRNA(Asn) + L-glutamine + ATP + H2O = L-asparaginyl-tRNA(Asn) + L-glutamate + ADP + phosphate + 2 H(+). Its function is as follows. Allows the formation of correctly charged Asn-tRNA(Asn) or Gln-tRNA(Gln) through the transamidation of misacylated Asp-tRNA(Asn) or Glu-tRNA(Gln) in organisms which lack either or both of asparaginyl-tRNA or glutaminyl-tRNA synthetases. The reaction takes place in the presence of glutamine and ATP through an activated phospho-Asp-tRNA(Asn) or phospho-Glu-tRNA(Gln). The chain is Aspartyl/glutamyl-tRNA(Asn/Gln) amidotransferase subunit B from Lawsonia intracellularis (strain PHE/MN1-00).